The following is a 226-amino-acid chain: Clarin-3 (226 aa).

Residues Leu8–Leu28 traverse the membrane as a helical segment. Residues Asn46 and Asn83 are each glycosylated (N-linked (GlcNAc...) asparagine). 3 consecutive transmembrane segments (helical) span residues Val92 to Phe112, Gly128 to Val148, and Phe181 to Tyr201.

It belongs to the clarin family.

It localises to the membrane. This chain is Clarin-3 (Clrn3), found in Rattus norvegicus (Rat).